Consider the following 380-residue polypeptide: MDGAKFENTVAFLPSEIFDCYNSTLPKNVFRSFVTWSCYEKFNSLEFRTWLLMWLPLIIAWKIRGKRHYLVIVTALMFEVLYFLWTYSYIFRERTLGKQVSQFAKEIITNTPGIDTEDWERVAVNFNSYLYENKLWNTEYFFFDGSSCQEAFRKMLLEPFSLKKNDFANAKVPDGSVCYTEKALQVYFTQIERKWHWINSEGFLHNKTTQSVQFSKHGYGSKLLWAFKEVTIMNSRFAFFSIAYLNGLLTIPRLRNSLHILYVCAVLSSMIIEYLIGIDKFRFKSMNLIHKLQFLSYITCGHEKSDATNWSQIAKRTNTYMFEQKIWNSPILFSDGIDCEKFFKWYFSTPVSSQASLSVGSTDFELWPYIKEAQSACNDV.

The Cytoplasmic segment spans residues 1–70 (MDGAKFENTV…WKIRGKRHYL (70 aa)). The chain crosses the membrane as a helical span at residues 71–91 (VIVTALMFEVLYFLWTYSYIF). The Extracellular portion of the chain corresponds to 92–231 (RERTLGKQVS…KLLWAFKEVT (140 aa)). Residues 232-252 (IMNSRFAFFSIAYLNGLLTIP) traverse the membrane as a helical segment. Over 253–257 (RLRNS) the chain is Cytoplasmic. A helical transmembrane segment spans residues 258-278 (LHILYVCAVLSSMIIEYLIGI). Over 279 to 380 (DKFRFKSMNL…KEAQSACNDV (102 aa)) the chain is Extracellular.

It belongs to the DUP/COS family.

The protein localises to the membrane. The sequence is that of Protein COS12 (COS12) from Saccharomyces cerevisiae (strain ATCC 204508 / S288c) (Baker's yeast).